Here is a 656-residue protein sequence, read N- to C-terminus: Anion exchange transporter (656 aa).

Topologically, residues 1 to 75 (MTGAKRKKKS…LAFAVLSSVH (75 aa)) are cytoplasmic. The chain crosses the membrane as a helical span at residues 76 to 96 (PVFGLYGSLFPAIIYAIFGMG). Residues 97–144 (HHVATGTFALTSLISANAVERIVPQNMQNLTTQSNTSVLGLSDFEMQR) lie on the Extracellular side of the membrane. A helical transmembrane segment spans residues 145-165 (IHVAAAVSFLGGVIQVAMFVL). Gln166 is a topological domain (cytoplasmic). Residues 167–187 (LGSATFVVTEPVISAMTTGAA) form a helical membrane-spanning segment. Topologically, residues 188-202 (THVVTSQVKYLLGMK) are extracellular. A helical transmembrane segment spans residues 203–223 (MPYISGPLGFFYIYAYVFENI). The Cytoplasmic segment spans residues 224-227 (KSVR). Residues 228-248 (LEALLLSLLSIVVLVLVKELN) traverse the membrane as a helical segment. Residues 249-254 (EQFKRK) are Extracellular-facing. A helical transmembrane segment spans residues 255–275 (IKVVLPVDLVLIIAASFACYC). Over 276–306 (TNMENTYGLEVVGHIPQGIPSPRAPPMNILS) the chain is Cytoplasmic. A helical transmembrane segment spans residues 307–327 (AVITEAFGVALVGYVASLALA). Over 328-343 (QGSAKKFKYSIDDNQE) the chain is Extracellular. Residues 344–364 (FLAHGLSNIVSSFFFCIPSAA) form a helical membrane-spanning segment. Topologically, residues 365 to 383 (AMGRTAGLYSTGAKTQVAC) are cytoplasmic. 2 consecutive transmembrane segments (helical) span residues 384 to 404 (LISC…LYWL) and 405 to 425 (PMCV…IQFR). Residues 426 to 448 (DLKKYWNVDKIDWGIWVSTYVFT) are Extracellular-facing. The chain crosses the membrane as a helical span at residues 449–469 (ICFAANVGLLFGVVCTIAIVI). The Cytoplasmic segment spans residues 470–656 (GRFPRAMTVS…LSKLSDHSEV (187 aa)). In terms of domain architecture, STAS spans 492 to 641 (TEMDSETLQQ…ESVSAAISHI (150 aa)). A membrane targeting region spans residues 641–656 (IHSNKNLSKLSDHSEV).

It belongs to the SLC26A/SulP transporter (TC 2.A.53) family. Expressed in the thyroid gland (at protein level). Expressed in tonsillar high endothelial venule endothelial cells (HEVEC), placenta and in testis, expressed in a subgroup of basal cells in the epididymal ducts.

Its subcellular location is the basolateral cell membrane. The protein resides in the recycling endosome membrane. The protein localises to the apical cell membrane. It localises to the lateral cell membrane. It carries out the reaction chloride(in) = chloride(out). The enzyme catalyses iodide(out) = iodide(in). The catalysed reaction is bromide(in) = bromide(out). It catalyses the reaction oxalate(in) = oxalate(out). It carries out the reaction nitrate(in) = nitrate(out). The enzyme catalyses sulfate(in) = sulfate(out). The catalysed reaction is thiocyanate(in) = thiocyanate(out). It catalyses the reaction D-gluconate(in) = D-gluconate(out). It carries out the reaction hydrogencarbonate(in) = hydrogencarbonate(out). The enzyme catalyses hydrogencarbonate(in) + chloride(out) = hydrogencarbonate(out) + chloride(in). With respect to regulation, is active at both alkaline and acidic pH. Activity is inhibited by 4,4'-Di-isothiocyanatostilbene-2,2'-disulfonic acid (DIDS - an inhibitor of several anion channels and transporters). Acts as an anion channel mediating the transport of chloride, sulfate and oxalate ions. Mediates the transport of bromide, iodide, nitrate, gluconate, thiocyanate and bicarbonate ions. Its permeability towards bicarbonate is weak and increases when pH is above 7. Mediates thiocyanate transport in retinal pigment epithelium cells. Mediates iodide transport in the thyroid gland, playing an important role in the synthesis of thyroid hormones and the maintenance of thyroid function. Although it is an anion channel, according to PubMed:12736153 and PubMed:32119864 it has been shown to exhibit chloride-bicarbonate exchanger activity. This chain is Anion exchange transporter, found in Homo sapiens (Human).